An 81-amino-acid polypeptide reads, in one-letter code: MTTTIFQQTNHTLDAIGLRCPEPVMMVRMNIRKIASGETLLIKCDDPSTARDIPSFCRFMEHELLAKQTDTLPFLYVIKKN.

Catalysis depends on Cys-20, which acts as the Cysteine persulfide intermediate.

It belongs to the sulfur carrier protein TusA family.

It localises to the cytoplasm. In terms of biological role, sulfur carrier protein which probably makes part of a sulfur-relay system. This Colwellia psychrerythraea (strain 34H / ATCC BAA-681) (Vibrio psychroerythus) protein is Sulfur carrier protein TusA.